The chain runs to 238 residues: Probable transcriptional regulatory protein SERP0322 (238 aa).

This sequence belongs to the TACO1 family. YeeN subfamily.

The protein resides in the cytoplasm. This chain is Probable transcriptional regulatory protein SERP0322, found in Staphylococcus epidermidis (strain ATCC 35984 / DSM 28319 / BCRC 17069 / CCUG 31568 / BM 3577 / RP62A).